Reading from the N-terminus, the 257-residue chain is MNPLIIKLGGVLLDSEEALERLFTALVNYRESHQRPLVIVHGGGCVVDELMKGLNLPVKKKDGLRVTPADQIGIITGALAGTANKTLLAWAKKHHIASVGLFLGDGDSVNVTQLDEALGHVGLAQPGSPKLINMLLENGFLPVVSSIGVTEDGQLMNVNADQAATALAATLGADLILLSDVSGILDGKGQRIAEMTASKAEQLIDQGIITDGMIVKVNAALDAARALGRPVDIASWRHAEQLPALFNGTPIGTRILA.

Substrate contacts are provided by residues 43–44 (GG), Arg-65, and Asn-157. Residues 180-185 (DVSGIL) and 208-210 (IIT) contribute to the ATP site.

Belongs to the acetylglutamate kinase family. ArgB subfamily. In terms of assembly, homodimer.

It is found in the cytoplasm. The enzyme catalyses N-acetyl-L-glutamate + ATP = N-acetyl-L-glutamyl 5-phosphate + ADP. It functions in the pathway amino-acid biosynthesis; L-arginine biosynthesis; N(2)-acetyl-L-ornithine from L-glutamate: step 2/4. Catalyzes the ATP-dependent phosphorylation of N-acetyl-L-glutamate. This Salmonella agona (strain SL483) protein is Acetylglutamate kinase.